Here is a 301-residue protein sequence, read N- to C-terminus: Thioredoxin-related transmembrane protein 2-A (301 aa).

An N-terminal signal peptide occupies residues 1–19; that stretch reads MSLIRGLISTIYYLPKIYK. Residues 20-111 are Extracellular-facing; that stretch reads WFYRPYYFLS…VVLFFRVDLR (92 aa). The chain crosses the membrane as a helical span at residues 112–132; sequence FGLLYLTLCVVFLITCKPPAY. One can recognise a Thioredoxin domain in the interval 122 to 269; that stretch reads VFLITCKPPA…IFQKYKKFSK (148 aa). Residues 133 to 301 lie on the Cytoplasmic side of the membrane; that stretch reads MGPENIKYFR…EEDSESKKDK (169 aa). Residues 268-301 form a disordered region; it reads SKGEKPEEPQPVLEEESESPLEEEEEDSESKKDK. Residues 280 to 295 show a composition bias toward acidic residues; that stretch reads LEEESESPLEEEEEDS. The Di-lysine motif motif lies at 298–301; it reads KKDK.

In terms of assembly, monomer. Homodimer; disulfide-linked. Occurs in both reduced and oxidized monomeric form. Oxidative conditions increase homodimerization.

It localises to the endoplasmic reticulum membrane. It is found in the mitochondrion membrane. Its function is as follows. Endoplasmic reticulum and mitochondria-associated protein that probably functions as a regulator of cellular redox state and thereby regulates protein post-translational modification, protein folding and mitochondrial activity. This chain is Thioredoxin-related transmembrane protein 2-A, found in Danio rerio (Zebrafish).